An 816-amino-acid chain; its full sequence is Coiled-coil and C2 domain-containing protein 1-like (816 aa).

Residues 1–11 (MFSRKKPEPAK) are compositionally biased toward basic and acidic residues. 3 disordered regions span residues 1–135 (MFSR…TFLP), 157–176 (ANAK…RGLK), and 186–269 (AAGK…RQTD). The span at 25 to 47 (IPDDFDPSAGYGEDDGGDSDLEA) shows a compositional bias: acidic residues. A compositionally biased stretch (basic and acidic residues) spans 73-85 (DLDKMIADSLRDV). The span at 86–100 (SDDDDDDNLESDPDL) shows a compositional bias: acidic residues. The span at 122-131 (PPAASEEPVQ) shows a compositional bias: low complexity. A DM14 1 region spans residues 145–200 (IKQRLEMYKQAEANAKTAGDSGKARRFGRGLKTLKDLHRQAAAGKSINVDDIPPEV). Residues 220 to 243 (PSTPASPPPVPSRAAPDPPTPGTP) show a composition bias toward pro residues. 2 DM14 regions span residues 265–317 (SRQT…MPPP) and 365–419 (LQQR…LPVP). Positions 355-382 (LAAATNMLEALQQRLEKYQSVEAAAKAE) form a coiled coil. Residues 418-492 (VPPGFGPLPT…TRTSGNQQKN (75 aa)) form a disordered region. Residues 424–433 (PLPTADAAPV) show a composition bias toward low complexity. The segment covering 434-449 (APTPSLPTSPTSPPPT) has biased composition (pro residues). Over residues 450–471 (ASTSAGGTPSSSSATTPTAPRK) the composition is skewed to low complexity. Polar residues predominate over residues 483-492 (TRTSGNQQKN). The DM14 4 stretch occupies residues 502–556 (LLERQKEFKLAAIEAKKAGEIDQAKEYLKIFKGFDSLLNAASSGLPVDLSTLPVP). In terms of domain architecture, C2 spans 637–776 (RKNEPLPKFH…ETKCEIHDTY (140 aa)).

It belongs to the CC2D1 family. In terms of assembly, interacts (via DM14 domains 1 and 3) with shrb; the interaction is direct and blocks access to the surface involved in shrb polymerization. This interaction may be required for the ESCRT-III complex role in multivesicular body formation.

Its subcellular location is the cytoplasm. It is found in the cytosol. It localises to the apicolateral cell membrane. The protein resides in the cell cortex. The protein localises to the endosome. Its function is as follows. Phosphatidyl inositol monophosphate binding protein involved in endosomal protein sorting through regulation of the endosomal sorting required for transport (ESCRT) pathway. Required for full activity of the ESCRT-III complex core component shrb/shrub, probably by preventing its inappropriate polymerisation. Required, but not essential, for the efficient generation of intraluminal vesicles (ILVs) in multivesicular bodies (MVBs). Involved in a late stage of the endosomal pathway targeting transmembrane proteins of the plasma membrane for lysosomal degradation. Plays a critical role in regulation of multiple signal transduction pathways, including the Notch and BMP/decapentaplegic (dpp) signaling pathways, through targeting of membrane bound receptors to multivesicular bodies, isolating them from the cytoplasm and targeting them for lysosomal degradation. Involved in targeting N/Notch for endosomal degradation, negatively regulating the Notch signaling pathway. Regulates Notch signaling in imaginal disk cells and follicle cells during oogenesis and multiple developmental processes, including development of wings, veins, legs, eyes and bristles. Restricts the activity of Notch to the dorsoventral (D/V) boundary of the wing imaginal disk. In external sensory organ development regulates Notch signaling during asymmetric cell division and differentiation of sensory organ precursor cells. May be involved in regulation of apoptosis and cell growth independent of Notch signaling. Involved in targeting tkv for endosomal degradation, negatively regulating the BMP/decapentaplegic (dpp) signaling pathway. Regulates the BMP/dpp signaling pathway in follicle cells during oogenesis, but not in imaginal disk cells during wing development. May be involved in differentiation or morphogenesis of peripodial epithelial cells in the developing imaginal disk. Involved in abscission of germline cells during oogenesis. In Drosophila melanogaster (Fruit fly), this protein is Coiled-coil and C2 domain-containing protein 1-like.